Consider the following 98-residue polypeptide: NADH-ubiquinone oxidoreductase chain 4L (98 aa).

A run of 3 helical transmembrane segments spans residues 1–21 (MSMVYFNIFMAFTVSLVGLLM), 29–49 (SLLCLEGMMLSLFVLMSMTIL), and 61–81 (IILLVFAACEAALGLSLLVMV).

It belongs to the complex I subunit 4L family. In terms of assembly, core subunit of respiratory chain NADH dehydrogenase (Complex I) which is composed of 45 different subunits.

Its subcellular location is the mitochondrion inner membrane. The catalysed reaction is a ubiquinone + NADH + 5 H(+)(in) = a ubiquinol + NAD(+) + 4 H(+)(out). Core subunit of the mitochondrial membrane respiratory chain NADH dehydrogenase (Complex I) which catalyzes electron transfer from NADH through the respiratory chain, using ubiquinone as an electron acceptor. Part of the enzyme membrane arm which is embedded in the lipid bilayer and involved in proton translocation. The sequence is that of NADH-ubiquinone oxidoreductase chain 4L (MT-ND4L) from Otaria byronia (South American sea lion).